Consider the following 254-residue polypeptide: 4-hydroxy-tetrahydrodipicolinate reductase (254 aa).

7–12 lines the NAD(+) pocket; the sequence is GASGRI. Arg35 contacts NADP(+). NAD(+)-binding positions include 91 to 93 and 115 to 118; these read GTT and AHNM. His147 acts as the Proton donor/acceptor in catalysis. His148 contributes to the (S)-2,3,4,5-tetrahydrodipicolinate binding site. The active-site Proton donor is the Lys151. Residue 157-158 participates in (S)-2,3,4,5-tetrahydrodipicolinate binding; that stretch reads GT.

Belongs to the DapB family.

It localises to the cytoplasm. The catalysed reaction is (S)-2,3,4,5-tetrahydrodipicolinate + NAD(+) + H2O = (2S,4S)-4-hydroxy-2,3,4,5-tetrahydrodipicolinate + NADH + H(+). The enzyme catalyses (S)-2,3,4,5-tetrahydrodipicolinate + NADP(+) + H2O = (2S,4S)-4-hydroxy-2,3,4,5-tetrahydrodipicolinate + NADPH + H(+). The protein operates within amino-acid biosynthesis; L-lysine biosynthesis via DAP pathway; (S)-tetrahydrodipicolinate from L-aspartate: step 4/4. Functionally, catalyzes the conversion of 4-hydroxy-tetrahydrodipicolinate (HTPA) to tetrahydrodipicolinate. The chain is 4-hydroxy-tetrahydrodipicolinate reductase from Helicobacter pylori (strain Shi470).